The sequence spans 588 residues: Thioredoxin domain-containing protein 3 (588 aa).

In terms of domain architecture, Thioredoxin spans 2–119 (ASKKREVQLQ…VINLIDEERK (118 aa)). Cys39 and Cys42 are oxidised to a cystine. NDK stretches follow at residues 157–257 (IAII…DQPE), 315–455 (LEKT…STLG), and 456–588 (LIKP…PEEN). A disordered region spans residues 230–261 (GSKHNPPSEETEPQTDTEPNERSEDQPEVEAQ).

This sequence in the C-terminal section; belongs to the NDK family. As to quaternary structure, monomer. As to expression, testis-specific. Expressed only in primary spermatocytes and round spermatids.

The protein resides in the cytoplasm. In terms of biological role, probably required during the final stages of sperm tail maturation in the testis and/or epididymis, where extensive disulfide bonding of fibrous sheath (FS) proteins occurs. In vitro, it has neither nucleoside diphosphate kinase (NDPK) activity nor reducing activity on disulfide bonds. Exhibits a 3'-5' exonuclease activity with a preference for single-stranded DNA, suggesting roles in DNA proofreading and repair. The chain is Thioredoxin domain-containing protein 3 from Homo sapiens (Human).